The sequence spans 553 residues: Dihydroxy-acid dehydratase (553 aa).

Mg(2+) is bound at residue D78. [2Fe-2S] cluster is bound at residue C119. Positions 120 and 121 each coordinate Mg(2+). K121 bears the N6-carboxylysine mark. C193 contributes to the [2Fe-2S] cluster binding site. Residue E441 participates in Mg(2+) binding. The Proton acceptor role is filled by S467.

Belongs to the IlvD/Edd family. As to quaternary structure, homodimer. The cofactor is [2Fe-2S] cluster. Mg(2+) is required as a cofactor.

It carries out the reaction (2R)-2,3-dihydroxy-3-methylbutanoate = 3-methyl-2-oxobutanoate + H2O. The enzyme catalyses (2R,3R)-2,3-dihydroxy-3-methylpentanoate = (S)-3-methyl-2-oxopentanoate + H2O. Its pathway is amino-acid biosynthesis; L-isoleucine biosynthesis; L-isoleucine from 2-oxobutanoate: step 3/4. The protein operates within amino-acid biosynthesis; L-valine biosynthesis; L-valine from pyruvate: step 3/4. In terms of biological role, functions in the biosynthesis of branched-chain amino acids. Catalyzes the dehydration of (2R,3R)-2,3-dihydroxy-3-methylpentanoate (2,3-dihydroxy-3-methylvalerate) into 2-oxo-3-methylpentanoate (2-oxo-3-methylvalerate) and of (2R)-2,3-dihydroxy-3-methylbutanoate (2,3-dihydroxyisovalerate) into 2-oxo-3-methylbutanoate (2-oxoisovalerate), the penultimate precursor to L-isoleucine and L-valine, respectively. This is Dihydroxy-acid dehydratase from Geobacter sulfurreducens (strain ATCC 51573 / DSM 12127 / PCA).